The chain runs to 484 residues: MVRVELQAASLMNGSSAAEEPQDALVGGDACGGRRPPSVLGVRLAVPEWEVAVTAVSLSLIILITIVGNVLVVLSVFTYKPLRIVQNFFIVSLAVADLTVAVLVMPFNVAYSLIQRWVFGIVVCKMWLTCDVLCCTASILNLCAIALDRYWAITDPINYAQKRTLRRVLAMIAGVWLLSGVISSPPLIGWNDWPMEFNDTTPCQLTEEQGYVIYSSLGSFFIPLFIMTIVYVEIFIATKRRLRERAKASKLNSAMKQQMAAQAVPSSVPSHDQESVSSETNHNELPPPPAPPSKEKRRKTKKKSKKKDQAAEEGRFLAPAMVAEDSVTDNSVSVGPVAKNHLAEDGYTCTTTTTTTTTTTAVTDSPRSRTASQKGSTAPPTPVQPKSIPVYQFIEEKQRISLSKERRAARTLGIIMGVFVVCWLPFFLMYVIVPFCNPSCKPSPKLVNFITWLGYINSALNPIIYTIFNLDFRRAFKKLLHFKT.

The Extracellular segment spans residues 1-54 (MVRVELQAASLMNGSSAAEEPQDALVGGDACGGRRPPSVLGVRLAVPEWEVAVT). Asparagine 13 is a glycosylation site (N-linked (GlcNAc...) asparagine). The chain crosses the membrane as a helical span at residues 55-77 (AVSLSLIILITIVGNVLVVLSVF). Topologically, residues 78–87 (TYKPLRIVQN) are cytoplasmic. The chain crosses the membrane as a helical span at residues 88 to 109 (FFIVSLAVADLTVAVLVMPFNV). Residues 110-126 (AYSLIQRWVFGIVVCKM) lie on the Extracellular side of the membrane. The cysteines at positions 124 and 203 are disulfide-linked. A helical transmembrane segment spans residues 127-147 (WLTCDVLCCTASILNLCAIAL). The Cytoplasmic portion of the chain corresponds to 148-167 (DRYWAITDPINYAQKRTLRR). The helical transmembrane segment at 168-190 (VLAMIAGVWLLSGVISSPPLIGW) threads the bilayer. Topologically, residues 191–215 (NDWPMEFNDTTPCQLTEEQGYVIYS) are extracellular. The N-linked (GlcNAc...) asparagine glycan is linked to asparagine 198. Residues 216 to 237 (SLGSFFIPLFIMTIVYVEIFIA) traverse the membrane as a helical segment. Topologically, residues 238 to 411 (TKRRLRERAK…LSKERRAART (174 aa)) are cytoplasmic. Residues 253–280 (SAMKQQMAAQAVPSSVPSHDQESVSSET) are compositionally biased toward polar residues. 2 disordered regions span residues 253–322 (SAMK…PAMV) and 350–383 (TTTTTTTTTTTAVTDSPRSRTASQKGSTAPPTPV). The span at 295-306 (EKRRKTKKKSKK) shows a compositional bias: basic residues. Residues 350-360 (TTTTTTTTTTT) show a composition bias toward low complexity. Residues 361–378 (AVTDSPRSRTASQKGSTA) are compositionally biased toward polar residues. A helical membrane pass occupies residues 412–433 (LGIIMGVFVVCWLPFFLMYVIV). Residues 434–448 (PFCNPSCKPSPKLVN) lie on the Extracellular side of the membrane. A helical membrane pass occupies residues 449–470 (FITWLGYINSALNPIIYTIFNL). Over 471–484 (DFRRAFKKLLHFKT) the chain is Cytoplasmic.

It belongs to the G-protein coupled receptor 1 family.

The protein localises to the cell membrane. In terms of biological role, G-protein coupled receptor for tyramine, a known neurotransmitter and neuromodulator and direct precursor of octopamine. The sequence is that of Putative tyramine receptor 2 (GCR2) from Locusta migratoria (Migratory locust).